A 138-amino-acid chain; its full sequence is Outer membrane protein assembly factor BamE (138 aa).

The N-terminal stretch at 1 to 42 (MSHLTMIKTLNLRPFHSASALRKIVITSILGVAVTMSGCSLL) is a signal peptide.

Belongs to the BamE family. As to quaternary structure, part of the Bam complex.

It localises to the cell outer membrane. In terms of biological role, part of the outer membrane protein assembly complex, which is involved in assembly and insertion of beta-barrel proteins into the outer membrane. This chain is Outer membrane protein assembly factor BamE, found in Psychrobacter arcticus (strain DSM 17307 / VKM B-2377 / 273-4).